A 147-amino-acid chain; its full sequence is 3-dehydroquinate dehydratase (147 aa).

Catalysis depends on Tyr-23, which acts as the Proton acceptor. Substrate is bound by residues Asn-75, His-81, and Asp-88. Catalysis depends on His-101, which acts as the Proton donor. Substrate-binding positions include 102–103 and Arg-112; that span reads LS.

This sequence belongs to the type-II 3-dehydroquinase family. In terms of assembly, homododecamer.

It catalyses the reaction 3-dehydroquinate = 3-dehydroshikimate + H2O. It functions in the pathway metabolic intermediate biosynthesis; chorismate biosynthesis; chorismate from D-erythrose 4-phosphate and phosphoenolpyruvate: step 3/7. Functionally, catalyzes a trans-dehydration via an enolate intermediate. In Thioalkalivibrio sulfidiphilus (strain HL-EbGR7), this protein is 3-dehydroquinate dehydratase.